Here is a 405-residue protein sequence, read N- to C-terminus: MFLIRLSRHNPSSFTLLTRRLHDQTISSSRLRDLYNFQSPPPLSSSASENPDFNQKNNNKKKPKPQYRPPSSLEGVKTVHSDLPFDFRFSYTESCSNVRPIGLREPKYSPFGPDRLDREWTGVCAPAVNPKVESVDGVEDPKLEEKRRKVREKIQGASLTEAERKFLVELCQRNKTKRQVNLGRDGLTHNMLNDVYNHWKHAEAVRVKCLGVPTLDMKNVIFHLEDKTFGQVVSKHSGTLVLYRGRNYDPKKRPKIPLMLWKPHEPVYPRLIKTTIDGLSIDETKAMRKKGLAVPALTKLAKNGYYGSLVPMVRDAFLVSELVRIDCLGLERKDYKKIGAKLRDLVPCILVTFDKEQVVIWRGKDYKPPKEDDEYSSFIHRESSIDSDVDLSCSRGAQDSPDETT.

A mitochondrion-targeting transit peptide spans 1–20 (MFLIRLSRHNPSSFTLLTRR). Residues 32 to 75 (RDLYNFQSPPPLSSSASENPDFNQKNNNKKKPKPQYRPPSSLEG) are disordered. 2 CRM domains span residues 157-255 (ASLT…KRPK) and 277-373 (DGLS…KEDD). The disordered stretch occupies residues 384 to 405 (SIDSDVDLSCSRGAQDSPDETT).

As to quaternary structure, part of large ribonucleo-protein complexes that include group IIB introns.

It localises to the mitochondrion. In terms of biological role, may be involved in the splicing of group IIB introns in mitochondria. The polypeptide is CRS2-associated factor 1, mitochondrial (Arabidopsis thaliana (Mouse-ear cress)).